Reading from the N-terminus, the 171-residue chain is MTRQSTYSRDQLLASARGELFAPDSGRLPNDPMLMFDRITEISNTGGAHGKGVIRAELDIRPDLWFFGCHFIGDPVMPGCLGLDAMWQLTGFFLTWIGAPGRGRALGCGEVKFTGQVLPSARLVRYEIDVSRVINRKLVMAQTDARMLVDGREIYTAKDLRVGMFTSTENF.

His-70 is a catalytic residue.

It belongs to the thioester dehydratase family. FabA subfamily. Homodimer.

The protein localises to the cytoplasm. It carries out the reaction a (3R)-hydroxyacyl-[ACP] = a (2E)-enoyl-[ACP] + H2O. The catalysed reaction is (3R)-hydroxydecanoyl-[ACP] = (2E)-decenoyl-[ACP] + H2O. It catalyses the reaction (2E)-decenoyl-[ACP] = (3Z)-decenoyl-[ACP]. It participates in lipid metabolism; fatty acid biosynthesis. Its function is as follows. Necessary for the introduction of cis unsaturation into fatty acids. Catalyzes the dehydration of (3R)-3-hydroxydecanoyl-ACP to E-(2)-decenoyl-ACP and then its isomerization to Z-(3)-decenoyl-ACP. Can catalyze the dehydratase reaction for beta-hydroxyacyl-ACPs with saturated chain lengths up to 16:0, being most active on intermediate chain length. The sequence is that of 3-hydroxydecanoyl-[acyl-carrier-protein] dehydratase from Xanthomonas axonopodis pv. citri (strain 306).